A 195-amino-acid chain; its full sequence is Imidazoleglycerol-phosphate dehydratase (195 aa).

The protein belongs to the imidazoleglycerol-phosphate dehydratase family.

Its subcellular location is the cytoplasm. It catalyses the reaction D-erythro-1-(imidazol-4-yl)glycerol 3-phosphate = 3-(imidazol-4-yl)-2-oxopropyl phosphate + H2O. Its pathway is amino-acid biosynthesis; L-histidine biosynthesis; L-histidine from 5-phospho-alpha-D-ribose 1-diphosphate: step 6/9. This Roseobacter denitrificans (strain ATCC 33942 / OCh 114) (Erythrobacter sp. (strain OCh 114)) protein is Imidazoleglycerol-phosphate dehydratase.